We begin with the raw amino-acid sequence, 705 residues long: SPbeta prophage-derived sublancin-168-processing and transport ATP-binding protein SunT (705 aa).

The Peptidase C39 domain maps to 12–138 (QFNSHDCGLA…SKFTNFILEI (127 aa)). Cysteine 18 is an active-site residue. 6 helical membrane passes run 167-187 (IVFV…AGSF), 205-225 (LITI…FDFV), 281-301 (ANFV…VILY), 306-326 (ILFL…ILFF), 388-408 (VISN…IILW), and 418-438 (SMSL…LSSL). An ABC transmembrane type-1 domain is found at 168 to 450 (VFVILLTSLF…ILSMQSDLQQ (283 aa)). One can recognise an ABC transporter domain in the interval 483-705 (IKTVNLNIGA…SYSENKEYSI (223 aa)). 516–523 (GESGTGKS) is a binding site for ATP.

This sequence belongs to the ABC transporter superfamily. SunT family. Homodimer.

The protein resides in the cell membrane. SunT (TC 3.A.1.112.4) is required for production of the lantibiotic sublancin-168, probably by both processing the signal peptide and exporting the resulting mature lantibiotic. This Bacillus subtilis (strain 168) protein is SPbeta prophage-derived sublancin-168-processing and transport ATP-binding protein SunT (sunT).